We begin with the raw amino-acid sequence, 328 residues long: Glucan endo-1,3-beta-glucosidase, basic isoform 3 (328 aa).

E85 acts as the Proton donor in catalysis. The active-site Nucleophile is the E230. Positions V306–M328 are cleaved as a propeptide — removed in mature form. N318 is a glycosylation site (N-linked (GlcNAc...) asparagine).

Belongs to the glycosyl hydrolase 17 family.

The protein localises to the vacuole. It catalyses the reaction Hydrolysis of (1-&gt;3)-beta-D-glucosidic linkages in (1-&gt;3)-beta-D-glucans.. Is thought to be an important plant defense-related product against fungal pathogens. The polypeptide is Glucan endo-1,3-beta-glucosidase, basic isoform 3 (GLUB3) (Solanum tuberosum (Potato)).